The sequence spans 2551 residues: Piezo-type mechanosensitive ion channel component (2551 aa).

8 helical membrane passes run 5-25, 27-47, 56-76, 106-126, 204-226, 231-250, 256-276, and 320-340; these read YACM…AALM, PVGI…VPLA, VTAF…GHIT, FIDL…LVFA, IHFE…FAAV, VPGG…WATC, GFAL…LSIV, and LSLD…ALAL. Residues 354 to 375 form a disordered region; it reads STRKARTPQPLESGSSVAPSVT. Residues 363–375 show a composition bias toward polar residues; it reads PLESGSSVAPSVT. The next 9 membrane-spanning stretches (helical) occupy residues 395 to 415, 424 to 444, 463 to 483, 516 to 536, 548 to 568, 588 to 608, 611 to 631, 639 to 659, and 695 to 715; these read TTTS…GFIY, ILMM…LLLS, PFIV…GMDL, VPLI…RQFF, LADF…SYLI, LLVR…AITG, MTGF…VFQS, IMYG…ILIY, and FLHL…VHYF. The segment covering 731-741 has biased composition (polar residues); the sequence is GSAQQKPTETT. Residues 731-772 are disordered; that stretch reads GSAQQKPTETTALEPAPSKRRGSAGSLRKSQGPSAEAAPGAT. 12 helical membrane-spanning segments follow: residues 819–839, 857–877, 910–930, 973–993, 994–1014, 1022–1042, 1071–1091, 1152–1172, 1174–1194, 1198–1218, 1239–1259, and 1275–1295; these read IAAF…FVGF, LISF…IEYL, LMSL…HAVI, LNFG…VSTI, TYRQ…LLLL, IWGV…IVLV, GALH…LVIL, VLCG…TNIA, LLAL…SDFY, IHTI…NILI, WLVH…QIML, and ITHQ…IFQL. 2 disordered regions span residues 1426–1521 and 1592–1658; these read NITE…AKDS and ESDE…PQQQ. Residues 1430–1448 are compositionally biased toward basic and acidic residues; it reads SEMKMQRRKTLYDKSKDAP. Over residues 1466 to 1477 the composition is skewed to low complexity; sequence ATASSSASPAPT. Basic and acidic residues predominate over residues 1497-1511; it reads QTSKETSDSKSKMEV. Low complexity-rich tracts occupy residues 1621-1634 and 1644-1658; these read PTST…TTTP and LQPL…PQQQ. 4 helical membrane passes run 1718–1738, 1741–1761, 1770–1790, and 1817–1837; these read ISSW…VVFI, VVNA…WGTL, FWVT…IFQF, and AHYA…RYLL. Positions 1854-1876 are disordered; the sequence is FTKPTASIDERDDSDNLSQPDSR. 7 helical membrane-spanning segments follow: residues 1937-1957, 1979-1999, 2008-2028, 2033-2053, 2075-2095, 2151-2171, and 2431-2451; these read ALMF…FTAF, IPFL…RALY, IIFH…VVPA, TFNS…YMLL, FSMV…LYEL, IMGG…LCLF, and TFSF…VLLA. The disordered stretch occupies residues 2522–2551; it reads EYVDDDGDTDSIPSRMSVRRPEQLQPQQPQ.

This sequence belongs to the PIEZO (TC 1.A.75) family.

It localises to the cell membrane. Component of a mechanosensitive channel required for rapidly adapting mechanically activated (MA) currents. Plays a major role in nociception (response to strong or painful touch). Required for maintaining the mechanosensitivity of tarsal bristle mechanosensors. During their evalulation of potential egg-laying sites, females determine the softest substrate for their eggs first by making a coarse evaluation of substrate hardness using mechanosensitive channels nan and Piezo in the leg tarsal bristles, followed by a much finer assessment using nan, iav and Tmc mechanosensitive channels on the labellum. Acts in the nompC- and nan-expressing neurons of the female leg tarsals, to sense the mild differences in egg-laying substrate stiffness. The polypeptide is Piezo-type mechanosensitive ion channel component (Drosophila melanogaster (Fruit fly)).